The following is a 157-amino-acid chain: 2-C-methyl-D-erythritol 2,4-cyclodiphosphate synthase (157 aa).

The a divalent metal cation site is built by aspartate 8 and histidine 10. Residues 8–10 and 34–35 contribute to the 4-CDP-2-C-methyl-D-erythritol 2-phosphate site; these read DVH and HS. Histidine 42 provides a ligand contact to a divalent metal cation. 4-CDP-2-C-methyl-D-erythritol 2-phosphate is bound by residues 56 to 58, 61 to 65, 132 to 135, phenylalanine 139, and arginine 142; these read DLG, FPDTD, and TTTE.

Belongs to the IspF family. In terms of assembly, homotrimer. A divalent metal cation serves as cofactor.

The enzyme catalyses 4-CDP-2-C-methyl-D-erythritol 2-phosphate = 2-C-methyl-D-erythritol 2,4-cyclic diphosphate + CMP. It functions in the pathway isoprenoid biosynthesis; isopentenyl diphosphate biosynthesis via DXP pathway; isopentenyl diphosphate from 1-deoxy-D-xylulose 5-phosphate: step 4/6. In terms of biological role, involved in the biosynthesis of isopentenyl diphosphate (IPP) and dimethylallyl diphosphate (DMAPP), two major building blocks of isoprenoid compounds. Catalyzes the conversion of 4-diphosphocytidyl-2-C-methyl-D-erythritol 2-phosphate (CDP-ME2P) to 2-C-methyl-D-erythritol 2,4-cyclodiphosphate (ME-CPP) with a corresponding release of cytidine 5-monophosphate (CMP). The polypeptide is 2-C-methyl-D-erythritol 2,4-cyclodiphosphate synthase (Salinibacter ruber (strain DSM 13855 / M31)).